The sequence spans 329 residues: Sex comb on midleg-like protein 1 (329 aa).

A phosphoserine mark is found at serine 138 and serine 238. The interval 138 to 157 (SPTLPVSRRENNSPSNLPRP) is disordered. The SAM domain occupies 258-325 (WSVEAVVLFL…YYIDRLKQGK (68 aa)).

The protein belongs to the SCM family. As to expression, ubiquitous. Expressed in fetal and adult tissues.

It localises to the nucleus. Functionally, putative Polycomb group (PcG) protein. PcG proteins act by forming multiprotein complexes, which are required to maintain the transcriptionally repressive state of homeotic genes throughout development. May be involved in spermatogenesis during sexual maturation. This is Sex comb on midleg-like protein 1 (SCML1) from Homo sapiens (Human).